The chain runs to 636 residues: Cysteine-rich receptor-like protein kinase 24 (636 aa).

An N-terminal signal peptide occupies residues 1-20; that stretch reads MVKFLVIFWFVVISFSHVSA. 2 consecutive Gnk2-homologous domains span residues 21–124 and 130–235; these read QVCL…NRSF and MEIL…LYPF. The Extracellular segment spans residues 21–254; sequence QVCLERSGFF…RQKDGKSIST (234 aa). 8 N-linked (GlcNAc...) asparagine glycosylation sites follow: Asn-33, Asn-50, Asn-98, Asn-101, Asn-121, Asn-137, Asn-145, and Asn-197. The helical transmembrane segment at 255-275 threads the bilayer; it reads GAIVAIIVVPILLLALGVGLW. Residues 276-636 lie on the Cytoplasmic side of the membrane; sequence KRRKAYKTKT…SVSVTCVSPR (361 aa). The region spanning 312-585 is the Protein kinase domain; the sequence is FHNVNKLGHG…TMSTVFHMLT (274 aa). ATP is bound by residues 318–326 and Lys-340; that span reads LGHGGFGEV. The active-site Proton acceptor is Asp-437.

This sequence belongs to the protein kinase superfamily. Ser/Thr protein kinase family. CRK subfamily.

Its subcellular location is the membrane. The enzyme catalyses L-seryl-[protein] + ATP = O-phospho-L-seryl-[protein] + ADP + H(+). It catalyses the reaction L-threonyl-[protein] + ATP = O-phospho-L-threonyl-[protein] + ADP + H(+). The sequence is that of Cysteine-rich receptor-like protein kinase 24 (CRK24) from Arabidopsis thaliana (Mouse-ear cress).